A 156-amino-acid chain; its full sequence is Small ribosomal subunit protein uS7 (156 aa).

It belongs to the universal ribosomal protein uS7 family. In terms of assembly, part of the 30S ribosomal subunit. Contacts proteins S9 and S11.

In terms of biological role, one of the primary rRNA binding proteins, it binds directly to 16S rRNA where it nucleates assembly of the head domain of the 30S subunit. Is located at the subunit interface close to the decoding center, probably blocks exit of the E-site tRNA. The protein is Small ribosomal subunit protein uS7 of Limosilactobacillus reuteri (strain DSM 20016) (Lactobacillus reuteri).